Here is a 338-residue protein sequence, read N- to C-terminus: Queuosine 5'-phosphate N-glycosylase/hydrolase (338 aa).

Met-1 carries the post-translational modification N-acetylmethionine. His-51, Phe-235, Asp-237, Asp-311, Tyr-312, and Asp-316 together coordinate queuine. Asp-237 (nucleophile or transition state stabilizer) is an active-site residue.

The protein belongs to the QNG1 protein family. In terms of tissue distribution, highly expressed in liver.

It catalyses the reaction queuosine 5'-phosphate + H2O = queuine + D-ribose 5-phosphate. Catalyzes the hydrolysis of queuosine 5'-phosphate, releasing the nucleobase queuine (q). Is required for salvage of queuine from exogenous queuosine (Q) that is imported and then converted to queuosine 5'-phosphate intracellularly. This Mus musculus (Mouse) protein is Queuosine 5'-phosphate N-glycosylase/hydrolase.